The primary structure comprises 57 residues: MAVPFRRTSKMKKRLRRTHFKLQVPGMVACPECGEMKISHRVCKSCGTYKGKDVKSN.

The protein belongs to the bacterial ribosomal protein bL32 family.

In Bacillus pumilus (strain SAFR-032), this protein is Large ribosomal subunit protein bL32.